Here is a 703-residue protein sequence, read N- to C-terminus: Ion-translocating oxidoreductase complex subunit C (703 aa).

4Fe-4S ferredoxin-type domains lie at 369 to 398 and 408 to 437; these read YDPQ…QQMY and KSNQ…IQYF. 8 residues coordinate [4Fe-4S] cluster: cysteine 378, cysteine 381, cysteine 384, cysteine 388, cysteine 417, cysteine 420, cysteine 423, and cysteine 427. Disordered regions lie at residues 467 to 542 and 555 to 680; these read RLER…PDNS and RQQT…PKKA. Residues 485 to 497 show a composition bias toward basic and acidic residues; the sequence is ARREELAANKGED. Residues 559 to 577 show a composition bias toward low complexity; the sequence is NGNSPVSSASNSDSATISA. Over residues 578-592 the composition is skewed to polar residues; the sequence is DNTHSTPKTAQNQTA. Composition is skewed to low complexity over residues 598–629 and 641–669; these read AAVA…TEKT and AAVA…EKTA.

Belongs to the 4Fe4S bacterial-type ferredoxin family. RnfC subfamily. In terms of assembly, the complex is composed of six subunits: RnfA, RnfB, RnfC, RnfD, RnfE and RnfG. [4Fe-4S] cluster is required as a cofactor.

Its subcellular location is the cell inner membrane. Functionally, part of a membrane-bound complex that couples electron transfer with translocation of ions across the membrane. The sequence is that of Ion-translocating oxidoreductase complex subunit C from Actinobacillus succinogenes (strain ATCC 55618 / DSM 22257 / CCUG 43843 / 130Z).